Here is an 839-residue protein sequence, read N- to C-terminus: Thymine dioxygenase JBP1 (839 aa).

The tract at residues 86–288 is thymine dioxygenase; it reads KVCGVLIPKA…RLSCVFYYRA (203 aa). Residues histidine 213, aspartate 215, and histidine 263 each contribute to the Fe cation site. Arginine 279 serves as a coordination point for 2-oxoglutarate. A DNA-binding JBP1 domain region spans residues 415 to 583; sequence KGDILNEAMN…EIEQARRRAP (169 aa).

It belongs to the TET family. JBP1 subfamily. As to quaternary structure, monomer. Binds to DNA as a monomer. The cofactor is Fe(2+).

Its subcellular location is the nucleus. It catalyses the reaction thymine + 2-oxoglutarate + O2 = 5-hydroxymethyluracil + succinate + CO2. Functionally, dioxygenase that catalyzes the first step of DNA base J (beta-d-glucosyl-HOMedU) biosynthesis by converting thymine to 5-hydroxymethyluracil (HOMedU). DNA base J is a hypermodified thymidine residue found in the genome of kinetoplastid parasites, which is localized primarily to repetitive DNA, namely the telomeres, and is implicated in the regulation of antigenic variation. Also specifically binds to base J-containing DNA (J-DNA). Involved in propagation and maintenance of DNA base J synthesis initiated by JBP2 by specifically binding already synthesized DNA base J and propagating J synthesis. Thymine dioxygenase activity and J-DNA-binding are independent functions. The protein is Thymine dioxygenase JBP1 (JBP1) of Trypanosoma brucei brucei.